The following is a 199-amino-acid chain: Recombination protein RecR (199 aa).

The C4-type zinc-finger motif lies at 56-71 (CAVCGNIAEETQCRIC). One can recognise a Toprim domain in the interval 79–174 (TVICVVEEPK…KVTRLASGLP (96 aa)).

The protein belongs to the RecR family.

Its function is as follows. May play a role in DNA repair. It seems to be involved in an RecBC-independent recombinational process of DNA repair. It may act with RecF and RecO. The protein is Recombination protein RecR of Thermobifida fusca (strain YX).